The sequence spans 314 residues: Taste receptor type 2 member 42 (314 aa).

Topologically, residues 1-7 (MATELDK) are extracellular. The chain crosses the membrane as a helical span at residues 8–28 (IFLILEIAEFIIGMLGNVFIG). Over 29-50 (LVNCSEGIKNQKVFSADFILTC) the chain is Cytoplasmic. Residues 51-71 (LAISTIGQLFVILFDSFLVGL) form a helical membrane-spanning segment. At 72–101 (ASHLYTTYRLGKPVIMLWHMTNHLTTWLAT) the chain is on the extracellular side. Residues 102–122 (CLSIFYFFKIAHFPHSLFLWL) form a helical membrane-spanning segment. Topologically, residues 123–127 (RWRMN) are cytoplasmic. Residues 128 to 148 (GMIVMLLILSLFLLIFDSLVL) traverse the membrane as a helical segment. The Extracellular portion of the chain corresponds to 149–187 (EIFIDISLNIIDKSNLTLYLDESKTLYDKLSILKTLLSL). Asparagine 163 is a glycosylation site (N-linked (GlcNAc...) asparagine). A helical membrane pass occupies residues 188 to 208 (TSFIPFSLSLTSLLFFFLSLV). Topologically, residues 209–238 (RHTRNLKLSSLGSRDSSTEAHRRAMKMVMS) are cytoplasmic. A helical transmembrane segment spans residues 239-259 (FLFLFIVHFFSLQVANWIFFM). Residues 260–265 (LWNNKY) are Extracellular-facing. The chain crosses the membrane as a helical span at residues 266–286 (IKFAMLALNAFPSCHSFILIL). Residues 287–314 (GNSKLRQTAVRLLWHLRNYTKTPNALPL) are Cytoplasmic-facing.

This sequence belongs to the G-protein coupled receptor T2R family.

The protein resides in the membrane. In terms of biological role, receptor that may play a role in the perception of bitterness and is gustducin-linked. May play a role in sensing the chemical composition of the gastrointestinal content. The activity of this receptor may stimulate alpha gustducin, mediate PLC-beta-2 activation and lead to the gating of TRPM5. The chain is Taste receptor type 2 member 42 (TAS2R42) from Pan paniscus (Pygmy chimpanzee).